The following is a 71-amino-acid chain: MGRKKESFENMLEKLETIVNSMDNGEITLEDSMKSYEEGIKLCNKLYKVLKDAEGKIKILEDNKEEDFENS.

This sequence belongs to the XseB family. In terms of assembly, heterooligomer composed of large and small subunits.

It is found in the cytoplasm. It catalyses the reaction Exonucleolytic cleavage in either 5'- to 3'- or 3'- to 5'-direction to yield nucleoside 5'-phosphates.. Its function is as follows. Bidirectionally degrades single-stranded DNA into large acid-insoluble oligonucleotides, which are then degraded further into small acid-soluble oligonucleotides. The polypeptide is Exodeoxyribonuclease 7 small subunit (Clostridium botulinum (strain Loch Maree / Type A3)).